The sequence spans 292 residues: 2-(5''-triphosphoribosyl)-3'-dephosphocoenzyme-A synthase (292 aa).

It belongs to the CitG/MdcB family.

The enzyme catalyses 3'-dephospho-CoA + ATP = 2'-(5''-triphospho-alpha-D-ribosyl)-3'-dephospho-CoA + adenine. Functionally, catalyzes the formation of 2-(5''-triphosphoribosyl)-3'-dephosphocoenzyme-A, the precursor of the prosthetic group of the holo-acyl carrier protein (gamma chain) of citrate lyase, from ATP and dephospho-CoA. This Escherichia coli O127:H6 (strain E2348/69 / EPEC) protein is 2-(5''-triphosphoribosyl)-3'-dephosphocoenzyme-A synthase.